A 743-amino-acid polypeptide reads, in one-letter code: Phosphoribosylformylglycinamidine synthase subunit PurL (743 aa).

Residue H54 is part of the active site. Residues Y57 and K96 each coordinate ATP. E98 serves as a coordination point for Mg(2+). Substrate contacts are provided by residues 99-102 and R121; that span reads SHNH. H100 acts as the Proton acceptor in catalysis. Mg(2+) is bound at residue D122. Q245 lines the substrate pocket. D273 provides a ligand contact to Mg(2+). Residue 317-319 participates in substrate binding; the sequence is ESQ. ATP-binding residues include D501 and G538. Position 539 (N539) interacts with Mg(2+). S541 is a substrate binding site.

The protein belongs to the FGAMS family. In terms of assembly, monomer. Part of the FGAM synthase complex composed of 1 PurL, 1 PurQ and 2 PurS subunits.

The protein localises to the cytoplasm. The enzyme catalyses N(2)-formyl-N(1)-(5-phospho-beta-D-ribosyl)glycinamide + L-glutamine + ATP + H2O = 2-formamido-N(1)-(5-O-phospho-beta-D-ribosyl)acetamidine + L-glutamate + ADP + phosphate + H(+). It participates in purine metabolism; IMP biosynthesis via de novo pathway; 5-amino-1-(5-phospho-D-ribosyl)imidazole from N(2)-formyl-N(1)-(5-phospho-D-ribosyl)glycinamide: step 1/2. Part of the phosphoribosylformylglycinamidine synthase complex involved in the purines biosynthetic pathway. Catalyzes the ATP-dependent conversion of formylglycinamide ribonucleotide (FGAR) and glutamine to yield formylglycinamidine ribonucleotide (FGAM) and glutamate. The FGAM synthase complex is composed of three subunits. PurQ produces an ammonia molecule by converting glutamine to glutamate. PurL transfers the ammonia molecule to FGAR to form FGAM in an ATP-dependent manner. PurS interacts with PurQ and PurL and is thought to assist in the transfer of the ammonia molecule from PurQ to PurL. This chain is Phosphoribosylformylglycinamidine synthase subunit PurL, found in Halalkalibacterium halodurans (strain ATCC BAA-125 / DSM 18197 / FERM 7344 / JCM 9153 / C-125) (Bacillus halodurans).